The following is a 920-amino-acid chain: Puromycin-sensitive aminopeptidase (920 aa).

Substrate contacts are provided by residues E181 and 317–321; that span reads GAMEN. A Zn(2+)-binding site is contributed by H353. E354 serves as the catalytic Proton acceptor. H357 and E376 together coordinate Zn(2+). A 3'-nitrotyrosine modification is found at Y465. Residues 727-731 carry the Nuclear localization signal motif; the sequence is RRRFK.

The protein belongs to the peptidase M1 family. As to quaternary structure, monomer. Requires Zn(2+) as cofactor. In terms of tissue distribution, widely expressed. Highest expression in brain, particularly the striatum and hippocampus. Expressed in Sertoli cells.

The protein localises to the cytoplasm. Its subcellular location is the cytosol. The protein resides in the nucleus. The catalysed reaction is Release of an N-terminal amino acid, preferentially alanine, from a wide range of peptides, amides and arylamides.. Strongly inhibited by bestatin, leuhistin, actinonin, amastatin, 1,10-phenanthroline, DFP, PCMBS, Zn(2+), Cd(2+), Co(2+), Cu(2+), Hg(2+), EDTA and puromycin. Not inhibited by PMSF, and only slightly inhibited by leupeptin and aprotinin. Activity is increased by Mg(2+) and Ca(2+). Aminopeptidase with broad substrate specificity for several peptides. Involved in proteolytic events essential for cell growth and viability. May act as regulator of neuropeptide activity. Plays a role in the antigen-processing pathway for MHC class I molecules. Involved in the N-terminal trimming of cytotoxic T-cell epitope precursors. Digests the poly-Q peptides found in many cellular proteins. The protein is Puromycin-sensitive aminopeptidase (Npepps) of Mus musculus (Mouse).